Consider the following 346-residue polypeptide: Phosphate acyltransferase (346 aa).

It belongs to the PlsX family. Homodimer. Probably interacts with PlsY.

The protein localises to the cytoplasm. It catalyses the reaction a fatty acyl-[ACP] + phosphate = an acyl phosphate + holo-[ACP]. Its pathway is lipid metabolism; phospholipid metabolism. Catalyzes the reversible formation of acyl-phosphate (acyl-PO(4)) from acyl-[acyl-carrier-protein] (acyl-ACP). This enzyme utilizes acyl-ACP as fatty acyl donor, but not acyl-CoA. This is Phosphate acyltransferase from Brucella melitensis biotype 2 (strain ATCC 23457).